A 244-amino-acid chain; its full sequence is MKIDILTLFPDMFTGVFGSSILKKAQEKEAVNLRVVNFRDYTTSKHNSVDDYPYGGGAGMVLTPQPIFDAVEDLTKETERKPRVVLMCPQGERFTQKKAEELAGEEHLIFVCGHYEGYDERIREHLVTDEISIGDYVLTGGELASMVITDSVVRLLPGVLGNHASQVEDSFSTGLLEHPHYTRPADFRGMKVPDVLMSGNHKNIDEWRHKESLRRTYTRRPDLLDERELSKQEKKWLEEIKREQ.

S-adenosyl-L-methionine is bound by residues G113 and 133–138 (IGDYVL).

The protein belongs to the RNA methyltransferase TrmD family. As to quaternary structure, homodimer.

It is found in the cytoplasm. It carries out the reaction guanosine(37) in tRNA + S-adenosyl-L-methionine = N(1)-methylguanosine(37) in tRNA + S-adenosyl-L-homocysteine + H(+). Its function is as follows. Specifically methylates guanosine-37 in various tRNAs. The protein is tRNA (guanine-N(1)-)-methyltransferase of Bacillus cereus (strain B4264).